A 287-amino-acid chain; its full sequence is 2-dehydro-3-deoxyphosphooctonate aldolase (287 aa).

It belongs to the KdsA family.

Its subcellular location is the cytoplasm. The enzyme catalyses D-arabinose 5-phosphate + phosphoenolpyruvate + H2O = 3-deoxy-alpha-D-manno-2-octulosonate-8-phosphate + phosphate. It participates in carbohydrate biosynthesis; 3-deoxy-D-manno-octulosonate biosynthesis; 3-deoxy-D-manno-octulosonate from D-ribulose 5-phosphate: step 2/3. It functions in the pathway bacterial outer membrane biogenesis; lipopolysaccharide biosynthesis. This is 2-dehydro-3-deoxyphosphooctonate aldolase from Leptospira interrogans serogroup Icterohaemorrhagiae serovar copenhageni (strain Fiocruz L1-130).